A 176-amino-acid chain; its full sequence is Nicotinamide-nucleotide adenylyltransferase (176 aa).

Belongs to the archaeal NMN adenylyltransferase family.

It is found in the cytoplasm. It catalyses the reaction beta-nicotinamide D-ribonucleotide + ATP + H(+) = diphosphate + NAD(+). It participates in cofactor biosynthesis; NAD(+) biosynthesis; NAD(+) from nicotinamide D-ribonucleotide: step 1/1. This is Nicotinamide-nucleotide adenylyltransferase from Halorubrum lacusprofundi (strain ATCC 49239 / DSM 5036 / JCM 8891 / ACAM 34).